The sequence spans 503 residues: MVLEMLNPMHYNITSMVPEAMPAATMPILLLTGLFLLVWNYEGTSSIPGPGYCMGIGPLISHGRFLWMGIGNACNYYNRMYGEFMRVWISGEETLIISKSSSMFHVMKHNHYSSRFGSKLGLQCIGMHEKGIIFNNNPDLWKTTRPLFMKALSGPGLVRMVTVCAESLNTHLDRLEEVTNESGFIDVLTLLRCVMLDTSNTLFLRIPLDENAIVFKIQGYFDAWQALLIKPDIFFKISWLYKKYEKSVKDLKDAIEVLMAEKRRRISAEEKLEEHIDFATELILAEKRGDLTRENVNQCMLEMLIAAPDTMSVSLFFMLFLIAKHPNVEEAIMKEIQTVVGERDVKIDDIQKLKVVENFIYESMRYQPVVDLVMRKALEDDVIDGYPVKKGTNIILNIGRMHRLEFFPKPNEFTLENFAKNVPYRYFQPFGFGPRSCAGKYIAMVMMKSILVTLLRRFHVKTLGGECVESLQKTNDLALHPDHTKSMLEMIFTPRNSGWCLEH.

Substrate contacts are provided by Asp309 and Met374. Residue Cys437 coordinates heme.

Belongs to the cytochrome P450 family. The cofactor is heme.

Its subcellular location is the membrane. It carries out the reaction testosterone + 3 reduced [NADPH--hemoprotein reductase] + 3 O2 = 17beta-estradiol + formate + 3 oxidized [NADPH--hemoprotein reductase] + 4 H2O + 4 H(+). The catalysed reaction is androst-4-ene-3,17-dione + 3 reduced [NADPH--hemoprotein reductase] + 3 O2 = estrone + formate + 3 oxidized [NADPH--hemoprotein reductase] + 4 H2O + 4 H(+). Its function is as follows. Catalyzes the formation of aromatic C18 estrogens from C19 androgens. The polypeptide is Aromatase (CYP19A1) (Callithrix jacchus (White-tufted-ear marmoset)).